The sequence spans 485 residues: uncharacterized protein (485 aa).

The next 11 helical transmembrane spans lie at 79–99 (LVTL…LIFA), 117–137 (VFAL…FLVF), 139–159 (FFSG…LADL), 170–190 (VIYF…SGFI), 199–219 (WEFW…FLLL), 275–295 (ILIC…LVLI), 313–333 (GLMY…AMPI), 355–375 (LPMG…FGWT), 380–400 (IFWF…IMTS), 421–441 (GVKI…ESLF), and 448–468 (WGCT…PILF).

Belongs to the major facilitator superfamily. CAR1 family.

Its subcellular location is the membrane. This is an uncharacterized protein from Schizosaccharomyces pombe (strain 972 / ATCC 24843) (Fission yeast).